The following is a 293-amino-acid chain: MNSYWLNVYKPRGISSAKLVSIIKKVLGKVKIGHSGTLDVEAEGVLPLAIGEATKLVQMLIDAKKTYIFTVKFGKQTDSGDYAGKVIAITDYIPSKENAYAICSKFIGTITQIPPAFSALKVNGVRAYKLARDGKEVELKPRNITIYDLKCLNYDEQNATATYYAECSKGTYIRTLAEDLALSLQSLGFVIELRRTQVGIFKEENSIRIDSFNDITKLSLEEKNIKIEAILDDILVLDANDEQAQKIKYGQKCLFDYDKNVDFMWVRYKGVLLTIGSLNKNCFHSLRVFNLTQ.

The Nucleophile role is filled by Asp-39.

It belongs to the pseudouridine synthase TruB family. Type 1 subfamily.

It carries out the reaction uridine(55) in tRNA = pseudouridine(55) in tRNA. In terms of biological role, responsible for synthesis of pseudouridine from uracil-55 in the psi GC loop of transfer RNAs. This chain is tRNA pseudouridine synthase B, found in Rickettsia bellii (strain RML369-C).